We begin with the raw amino-acid sequence, 199 residues long: uncharacterized protein (199 aa).

The next 7 helical transmembrane spans lie at 10 to 32 (LTSQAAVLTSLVVIGLILCFIGY), 37 to 59 (VYSAVIGLFIGQLVGIYITINYY), 63 to 80 (LIVILASAIVGALLFALI), 83 to 100 (LGLIVTGAAFGYFVGVYL), 104 to 121 (YQVYAFVLAALFALINLF), 126 to 148 (LTVLITSVIGASAIALAVHMGIT), and 163 to 185 (FDAIFSNAYFDLLWFTLVLTGII).

Its subcellular location is the cell membrane. This is an uncharacterized protein from Archaeoglobus fulgidus (strain ATCC 49558 / DSM 4304 / JCM 9628 / NBRC 100126 / VC-16).